The primary structure comprises 199 residues: dITP/XTP pyrophosphatase (199 aa).

7-12 provides a ligand contact to substrate; it reads TSNRGK. Catalysis depends on Asp74, which acts as the Proton acceptor. Asp74 is a Mg(2+) binding site. Residues Ser75, 156–159, Lys179, and 184–185 contribute to the substrate site; these read FGYD and HR.

The protein belongs to the HAM1 NTPase family. In terms of assembly, homodimer. Requires Mg(2+) as cofactor.

The catalysed reaction is XTP + H2O = XMP + diphosphate + H(+). It carries out the reaction dITP + H2O = dIMP + diphosphate + H(+). It catalyses the reaction ITP + H2O = IMP + diphosphate + H(+). Pyrophosphatase that catalyzes the hydrolysis of nucleoside triphosphates to their monophosphate derivatives, with a high preference for the non-canonical purine nucleotides XTP (xanthosine triphosphate), dITP (deoxyinosine triphosphate) and ITP. Seems to function as a house-cleaning enzyme that removes non-canonical purine nucleotides from the nucleotide pool, thus preventing their incorporation into DNA/RNA and avoiding chromosomal lesions. This Sulfurimonas denitrificans (strain ATCC 33889 / DSM 1251) (Thiomicrospira denitrificans (strain ATCC 33889 / DSM 1251)) protein is dITP/XTP pyrophosphatase.